A 1479-amino-acid chain; its full sequence is WASH complex subunit 2 (1479 aa).

Over residues 1–17 the composition is skewed to low complexity; sequence MPEEQPQQQQQPVREQP. Disordered stretches follow at residues 1–25, 188–210, 240–564, 576–1383, and 1419–1479; these read MPEEQPQQQQQPVREQPSNPDDVPW, GGLVEGGEQAGTDAQPSANTEKK, FIED…GGVK, FSGK…FDDI, and TSTT…NLFD. The segment covering 242–279 has biased composition (acidic residues); that stretch reads EDSDSDSSDEEDEEDVDAEDGSDESSSESSSDDDDEKD. Residues 334 to 349 show a composition bias toward low complexity; the sequence is SKKSSNSYTSSLSDIL. Acidic residues predominate over residues 422–431; sequence DDDLFGDSEE. Composition is skewed to low complexity over residues 465-475 and 514-532; these read TTTSSQPQQKK and TPKPKSTTTSAAPTATTTK. Thr-535 is subject to Phosphothreonine. Over residues 542-552 the composition is skewed to polar residues; the sequence is ASGSESTTGKS. Basic and acidic residues predominate over residues 595–620; sequence TESKASEDDFFSSDKKSTSATKKDAE. Residues 709–723 are compositionally biased toward low complexity; the sequence is PKAPTTATTTTTTKP. The segment covering 765–781 has biased composition (basic and acidic residues); that stretch reads TETKKQPITEEPKKKQD. Over residues 802-814 the composition is skewed to polar residues; it reads ASISPASPVSTIE. Residues 839–885 are compositionally biased toward basic and acidic residues; that stretch reads DLTKDEPAKSEPTKVEPTKVEPTKAEPTKVEPAKVEPTKVESDKKES. A compositionally biased stretch (polar residues) spans 904–916; sequence KNPTTSSSTTATE. The span at 951–968 shows a compositional bias: low complexity; sequence SSTTKKSTTTTTTTTSSK. Over residues 981-990 the composition is skewed to basic and acidic residues; that stretch reads KKVEEKKSSD. Composition is skewed to low complexity over residues 991–1000 and 1010–1021; these read FDSFFSGSDD and KTTTTPPLTSTT. The span at 1062–1075 shows a compositional bias: polar residues; it reads PLTSNNTKNRTKSI. Residues 1091-1107 are compositionally biased toward basic and acidic residues; sequence EKNRSESPTSEKAEPTK. Residues 1108–1123 show a composition bias toward polar residues; it reads KTSNISSLQNKLSLNP. A compositionally biased stretch (low complexity) spans 1147 to 1162; the sequence is STNNDNDSSATDLSDS. 2 stretches are compositionally biased toward polar residues: residues 1163-1174 and 1220-1236; these read GRSSPSVTSPTL and KSGTSAPNRSESPTPTQ. Ser-1249 carries the phosphoserine modification. Residues 1277–1292 are compositionally biased toward low complexity; sequence EKTSSGKSSPSPTIKS. The segment covering 1307–1317 has biased composition (polar residues); it reads ASTTTKPTASE. Positions 1327 to 1358 are enriched in basic and acidic residues; sequence KKSEPETPKETPKETPKEKEQTKEKEQPKETP. 2 stretches are compositionally biased toward low complexity: residues 1419-1445 and 1452-1466; these read TSTTSKSTTTTTTTTTTKAKSTKAVDN and NTTTKATPTKATPSK.

The protein belongs to the FAM21 family. As to quaternary structure, probable component of the WASH complex.

This Dictyostelium discoideum (Social amoeba) protein is WASH complex subunit 2.